A 360-amino-acid chain; its full sequence is MKLVFRWYGEKHDTVTLEQIRQIPGVEGVVGALFDIPVGEVWPFEEIMKLKETVEKAGLKLEVIESVNVHEDIKLGLPTRDRYIENYKKTIRNLAKAGVKVVCYNFMPVFDWMRTDLHKKLPDGSETMEYDHRLIEGVTPDELIKRVKEGSQGFVLPGWEWDRLEKLRETFELYKNVDEEKLFENLVYFLERVIPVCEECDVKLAIHPDDPPWSIFGLPRIITNKENIERMLKAVDSPYNGITFCMGSLGANPENNIPEMIRYFGKMGRIHFAHVRNLKFTGEKSFYETAHPSFCGSHDLFEVMKAFHDIGYEGYIRPDHGRLIWGEKARPGYGLYDRALGATYILGLWEAIDKMKKRYC.

The protein belongs to the mannonate dehydratase family. It depends on Fe(2+) as a cofactor. Requires Mn(2+) as cofactor.

It catalyses the reaction D-mannonate = 2-dehydro-3-deoxy-D-gluconate + H2O. The protein operates within carbohydrate metabolism; pentose and glucuronate interconversion. Functionally, catalyzes the dehydration of D-mannonate. The polypeptide is Mannonate dehydratase (uxuA) (Thermotoga maritima (strain ATCC 43589 / DSM 3109 / JCM 10099 / NBRC 100826 / MSB8)).